Reading from the N-terminus, the 125-residue chain is Protein ApaG (125 aa).

An ApaG domain is found at 1–125 (MADSPRVCVQ…FRLAVPTLIH (125 aa)).

The polypeptide is Protein ApaG (Cronobacter sakazakii (strain ATCC BAA-894) (Enterobacter sakazakii)).